An 80-amino-acid polypeptide reads, in one-letter code: Small ribosomal subunit protein uS17c (80 aa).

This sequence belongs to the universal ribosomal protein uS17 family. Part of the 30S ribosomal subunit.

Its subcellular location is the plastid. It is found in the chloroplast. In terms of biological role, one of the primary rRNA binding proteins, it binds specifically to the 5'-end of 16S ribosomal RNA. This is Small ribosomal subunit protein uS17c (rps17) from Gracilaria tenuistipitata var. liui (Red alga).